We begin with the raw amino-acid sequence, 381 residues long: Creatine kinase B-type (381 aa).

Ser4 carries the phosphoserine modification. Residues 11–98 (KLRFPAEDEF…FDPIIEERHG (88 aa)) form the Phosphagen kinase N-terminal domain. At Thr35 the chain carries Phosphothreonine. Residue Lys45 forms a Glycyl lysine isopeptide (Lys-Gly) (interchain with G-Cter in ubiquitin) linkage. Position 72 (Val72) interacts with creatine. Residues 96 to 110 (RHGGYQPSDEHKTDL) are compositionally biased toward basic and acidic residues. The segment at 96–123 (RHGGYQPSDEHKTDLNPDNLQGGDDLDP) is disordered. Lys107 participates in a covalent cross-link: Glycyl lysine isopeptide (Lys-Gly) (interchain with G-Cter in ubiquitin). Tyr125 carries the phosphotyrosine modification. The region spanning 125–367 (YVLSSRVRTG…KLLIEMEQRL (243 aa)) is the Phosphagen kinase C-terminal domain. ATP contacts are provided by residues 128 to 132 (SSRVR), Arg130, Arg132, and His191. Positions 130–138 (RVRTGRSIR) are internal MTS-like signal. At Ser199 the chain carries Phosphoserine. Residue Glu232 coordinates creatine. Arg236 is an ATP binding site. Tyr269 is modified (3'-nitrotyrosine). Ser285 is a creatine binding site. Arg292 lines the ATP pocket. Residue Ser309 is modified to Phosphoserine. Residues Arg320, 320–325 (RGTGGV), and Asp335 each bind ATP. Thr322 is modified (phosphothreonine). Lys381 is covalently cross-linked (Glycyl lysine isopeptide (Lys-Gly) (interchain with G-Cter in ubiquitin)).

Belongs to the ATP:guanido phosphotransferase family. As to quaternary structure, dimer of identical or non-identical chains, which can be either B (brain type) or M (muscle type). With MM being the major form in skeletal muscle and myocardium, MB existing in myocardium, and BB existing in many tissues, especially brain. Interacts with SLC12A6 (via C-terminus); the interaction may be required for SLC12A6 potassium-chloride cotransport activity. Ubiquitinated by the ECS(ASB9) complex, leading to its degradation by the proteasome. In terms of tissue distribution, expressed in hippocampus and corpus callosum (at protein level).

It localises to the cytoplasm. Its subcellular location is the cytosol. The protein localises to the mitochondrion. It is found in the cell membrane. It catalyses the reaction creatine + ATP = N-phosphocreatine + ADP + H(+). Functionally, reversibly catalyzes the transfer of phosphate between ATP and various phosphogens (e.g. creatine phosphate). Creatine kinase isoenzymes play a central role in energy transduction in tissues with large, fluctuating energy demands, such as skeletal muscle, heart, brain and spermatozoa. Acts as a key regulator of adaptive thermogenesis as part of the futile creatine cycle: localizes to the mitochondria of thermogenic fat cells and acts by mediating phosphorylation of creatine to initiate a futile cycle of creatine phosphorylation and dephosphorylation. During the futile creatine cycle, creatine and N-phosphocreatine are in a futile cycle, which dissipates the high energy charge of N-phosphocreatine as heat without performing any mechanical or chemical work. The polypeptide is Creatine kinase B-type (Mus musculus (Mouse)).